We begin with the raw amino-acid sequence, 344 residues long: Mitochondrial mRNA pseudouridine synthase RPUSD3 (344 aa).

The transit peptide at 1–41 (MGGWRVLGQASGGWRRGLGIRATSTAAGFGTKARHQLQRRG) directs the protein to the mitochondrion. Positions 29-59 (FGTKARHQLQRRGASKPSDPPGDQPFPGLLR) are disordered. A compositionally biased stretch (basic residues) spans 32–42 (KARHQLQRRGA). Ser64 carries the phosphoserine modification.

It belongs to the pseudouridine synthase RluA family. In terms of assembly, forms a regulatory protein-RNA complex, consisting of RCC1L, NGRN, RPUSD3, RPUSD4, TRUB2, FASTKD2 and 16S mt-rRNA.

The protein resides in the mitochondrion matrix. The enzyme catalyses a uridine in mRNA = a pseudouridine in mRNA. Catalyzes uridine to pseudouridine isomerization (pseudouridylation) of specific mitochondrial mRNAs (mt-mRNAs), a post-transcriptional modification necessary for their translation. Acts at position 390 in COXI mt-mRNA and at position 697-699 in mitochondrial COXIII mt-mRNA. As a component of a functional protein-RNA module, consisting of RCC1L, NGRN, RPUSD3, RPUSD4, TRUB2, FASTKD2 and 16S mitochondrial ribosomal RNA (16S mt-rRNA), controls 16S mt-rRNA abundance and may play a role in mitochondrial ribosome biogenesis. The chain is Mitochondrial mRNA pseudouridine synthase RPUSD3 (RPUSD3) from Bos taurus (Bovine).